The primary structure comprises 838 residues: Periplasmic nitrate reductase (838 aa).

The tat-type signal signal peptide spans 1–29; it reads MKVSRRAFIKQTAAAATASVAGVTLPAGA. The 4Fe-4S Mo/W bis-MGD-type domain occupies 41–97; sequence LKWSKAPCRFCGTGCGVEVAVKDNRVVATQGDPKAEVNRGLNCVKGYFLSKIMYGKD. 4 residues coordinate [4Fe-4S] cluster: Cys48, Cys51, Cys55, and Cys83. Mo-bis(molybdopterin guanine dinucleotide) is bound by residues Lys85, Gln152, Asn177, Cys181, 214–221, 245–249, Met382, Gln386, Asn492, 518–519, Lys541, Asp568, and 728–737; these read WGSNMAEM, STFTH, SD, and TGRVLEHWHS. Position 804 (Trp804) interacts with substrate. Asn812 and Lys829 together coordinate Mo-bis(molybdopterin guanine dinucleotide).

The protein belongs to the prokaryotic molybdopterin-containing oxidoreductase family. NasA/NapA/NarB subfamily. As to quaternary structure, component of the periplasmic nitrate reductase NapAB complex composed of NapA and NapB. The cofactor is [4Fe-4S] cluster. Mo-bis(molybdopterin guanine dinucleotide) is required as a cofactor. Predicted to be exported by the Tat system. The position of the signal peptide cleavage has not been experimentally proven.

The protein localises to the periplasm. The enzyme catalyses 2 Fe(II)-[cytochrome] + nitrate + 2 H(+) = 2 Fe(III)-[cytochrome] + nitrite + H2O. In terms of biological role, catalytic subunit of the periplasmic nitrate reductase complex NapAB. Receives electrons from NapB and catalyzes the reduction of nitrate to nitrite. The protein is Periplasmic nitrate reductase of Ralstonia pickettii (strain 12J).